The chain runs to 305 residues: tRNA dimethylallyltransferase (305 aa).

Residue 13 to 20 (GPTSSGKT) coordinates ATP. Residue 15–20 (TSSGKT) participates in substrate binding. The interval 39–42 (DSKQ) is interaction with substrate tRNA.

The protein belongs to the IPP transferase family. As to quaternary structure, monomer. Mg(2+) serves as cofactor.

It catalyses the reaction adenosine(37) in tRNA + dimethylallyl diphosphate = N(6)-dimethylallyladenosine(37) in tRNA + diphosphate. Functionally, catalyzes the transfer of a dimethylallyl group onto the adenine at position 37 in tRNAs that read codons beginning with uridine, leading to the formation of N6-(dimethylallyl)adenosine (i(6)A). This chain is tRNA dimethylallyltransferase, found in Neorickettsia sennetsu (strain ATCC VR-367 / Miyayama) (Ehrlichia sennetsu).